The chain runs to 387 residues: TSC22 domain family protein 4 (387 aa).

Disordered regions lie at residues 1 to 85 and 135 to 232; these read MSGG…GEPY and ISTP…RRDG. Residues 31-51 show a composition bias toward pro residues; it reads PVPPALAGPPPRLPNGDPNPD. The residue at position 57 (threonine 57) is a Phosphothreonine. Phosphoserine occurs at positions 62 and 165. Threonine 183 bears the Phosphothreonine mark. A phosphoserine mark is found at serine 187, serine 189, and serine 219. Phosphothreonine is present on threonine 223. Phosphoserine occurs at positions 254, 258, and 271. The tract at residues 336 to 357 is leucine-zipper; sequence LKEQIRDLAERNAALEQENGLL. Serine 362 is subject to Phosphoserine. The segment at 368–387 is disordered; sequence QLPSSGLPRLGPSAPNGPSI.

It belongs to the TSC-22/Dip/Bun family. As to quaternary structure, forms a homodimer or heterodimer. Forms a heterodimer with TSC22D1 isoforms 1 and 2. Interacts with NRBP1. In terms of tissue distribution, expressed in the liver (at protein level). Expressed in Purkinje cells and proliferating cerebellar granular neurons (at protein level). Expressed in the cortex, medulla and papilla of the kidney.

It is found in the nucleus. It localises to the cytoplasm. Its subcellular location is the cell projection. The protein resides in the dendrite. The protein localises to the synapse. Functionally, binds DNA and acts as a transcriptional repressor. Involved in the regulation of systematic glucose homeostasis and insulin sensitivity, via transcriptional repression of downstream insulin signaling targets such as OBP2A/LCN13. Acts as a negative regulator of lipogenic gene expression in hepatocytes and thereby mediates the control of very low-density lipoprotein release. May play a role in neurite elongation and survival. The chain is TSC22 domain family protein 4 from Mus musculus (Mouse).